The following is a 702-amino-acid chain: Polyribonucleotide nucleotidyltransferase 2 (702 aa).

Mg(2+) is bound by residues Asp-483 and Asp-489. Residues 550–609 (PQVTKLKVHPDKVREVIGAGGKVINKIIDETGVKINIENDGTIYIAAPDQESARVALEMI) enclose the KH domain. The region spanning 619–687 (GEVYTGKVIK…PQGKIGLSRK (69 aa)) is the S1 motif domain.

The protein belongs to the polyribonucleotide nucleotidyltransferase family. Requires Mg(2+) as cofactor.

The protein localises to the cytoplasm. It catalyses the reaction RNA(n+1) + phosphate = RNA(n) + a ribonucleoside 5'-diphosphate. Involved in mRNA degradation. Catalyzes the phosphorolysis of single-stranded polyribonucleotides processively in the 3'- to 5'-direction. In Alkaliphilus metalliredigens (strain QYMF), this protein is Polyribonucleotide nucleotidyltransferase 2.